The primary structure comprises 121 residues: Ribonuclease P protein component (121 aa).

This sequence belongs to the RnpA family. As to quaternary structure, consists of a catalytic RNA component (M1 or rnpB) and a protein subunit.

It catalyses the reaction Endonucleolytic cleavage of RNA, removing 5'-extranucleotides from tRNA precursor.. Functionally, RNaseP catalyzes the removal of the 5'-leader sequence from pre-tRNA to produce the mature 5'-terminus. It can also cleave other RNA substrates such as 4.5S RNA. The protein component plays an auxiliary but essential role in vivo by binding to the 5'-leader sequence and broadening the substrate specificity of the ribozyme. This chain is Ribonuclease P protein component, found in Rickettsia prowazekii (strain Madrid E).